The following is a 257-amino-acid chain: Acetylglutamate kinase (257 aa).

Substrate-binding positions include 41 to 42 (GG), arginine 63, and asparagine 155.

It belongs to the acetylglutamate kinase family. ArgB subfamily.

The protein localises to the cytoplasm. It carries out the reaction N-acetyl-L-glutamate + ATP = N-acetyl-L-glutamyl 5-phosphate + ADP. The protein operates within amino-acid biosynthesis; L-arginine biosynthesis; N(2)-acetyl-L-ornithine from L-glutamate: step 2/4. In terms of biological role, catalyzes the ATP-dependent phosphorylation of N-acetyl-L-glutamate. The protein is Acetylglutamate kinase of Solibacter usitatus (strain Ellin6076).